A 353-amino-acid polypeptide reads, in one-letter code: Protein RecA (353 aa).

68-75 (GPESSGKT) is an ATP binding site.

It belongs to the RecA family.

It localises to the cytoplasm. Functionally, can catalyze the hydrolysis of ATP in the presence of single-stranded DNA, the ATP-dependent uptake of single-stranded DNA by duplex DNA, and the ATP-dependent hybridization of homologous single-stranded DNAs. It interacts with LexA causing its activation and leading to its autocatalytic cleavage. This Roseiflexus sp. (strain RS-1) protein is Protein RecA.